Here is a 535-residue protein sequence, read N- to C-terminus: Peptide chain release factor 3 (535 aa).

Residues 8-276 (ARRRTFAIIS…ALVDLAPQPG (269 aa)) enclose the tr-type G domain. GTP contacts are provided by residues 17 to 24 (SHPDAGKT), 85 to 89 (DTPGH), and 139 to 142 (NKMD).

It belongs to the TRAFAC class translation factor GTPase superfamily. Classic translation factor GTPase family. PrfC subfamily.

The protein resides in the cytoplasm. In terms of biological role, increases the formation of ribosomal termination complexes and stimulates activities of RF-1 and RF-2. It binds guanine nucleotides and has strong preference for UGA stop codons. It may interact directly with the ribosome. The stimulation of RF-1 and RF-2 is significantly reduced by GTP and GDP, but not by GMP. The sequence is that of Peptide chain release factor 3 from Bordetella avium (strain 197N).